Reading from the N-terminus, the 213-residue chain is Small ribosomal subunit protein uS3 (213 aa).

One can recognise a KH type-2 domain in the interval 38–106; it reads IRKYVKEKIF…EFALEVSEIR (69 aa).

The protein belongs to the universal ribosomal protein uS3 family. Part of the 30S ribosomal subunit. Forms a tight complex with proteins S10 and S14.

In terms of biological role, binds the lower part of the 30S subunit head. Binds mRNA in the 70S ribosome, positioning it for translation. The sequence is that of Small ribosomal subunit protein uS3 from Maridesulfovibrio salexigens (strain ATCC 14822 / DSM 2638 / NCIMB 8403 / VKM B-1763) (Desulfovibrio salexigens).